Consider the following 752-residue polypeptide: Cation-transporting P-type ATPase B (752 aa).

The HMA domain maps to 15–78 (RRIRLDVSGM…VVEKAGYHAA (64 aa)). 2 residues coordinate a metal cation: C26 and C29. 6 helical membrane-spanning segments follow: residues 105–125 (LLVAAVLFVPLADLSTLFAIV), 132–152 (GWGYILTALAAPVVTWAAWPF), 167–187 (METLISVGIVAATAWSLSSVF), 201–221 (AILNSDSIYLEVAAGVTVFVL), 361–381 (IAGVFVPVVFVIAGLAGAAWL), and 390–410 (AFSVTLGVLVIACPCALGLAT). D446 (4-aspartylphosphate intermediate) is an active-site residue. A helical transmembrane segment spans residues 714 to 734 (AIPIAAAGLLNPLIAGAAMAF).

This sequence belongs to the cation transport ATPase (P-type) (TC 3.A.3) family. Type IB subfamily.

Its subcellular location is the cell membrane. It carries out the reaction ATP + H2O = ADP + phosphate + H(+). This is Cation-transporting P-type ATPase B (ctpB) from Mycobacterium bovis (strain ATCC BAA-935 / AF2122/97).